Consider the following 151-residue polypeptide: Transcriptional repressor NrdR (151 aa).

The segment at 3–34 (CPFCSSDNTRVIDSRPADDNSSIRRRRLCDDC) is a zinc-finger region. An ATP-cone domain is found at 49–139 (LIVIKKDNNR…VYREFKDVNT (91 aa)).

Belongs to the NrdR family. The cofactor is Zn(2+).

Its function is as follows. Negatively regulates transcription of bacterial ribonucleotide reductase nrd genes and operons by binding to NrdR-boxes. The sequence is that of Transcriptional repressor NrdR from Agathobacter rectalis (strain ATCC 33656 / DSM 3377 / JCM 17463 / KCTC 5835 / VPI 0990) (Eubacterium rectale).